A 198-amino-acid chain; its full sequence is 5'-deoxynucleotidase hdd1 (198 aa).

One can recognise an HD domain in the interval 38-144 (IADHMYRMGI…VKDIDKFEMI (107 aa)). Histidine 41, histidine 69, aspartate 70, glutamate 73, aspartate 78, isoleucine 79, and aspartate 139 together coordinate a divalent metal cation.

The protein belongs to the HDDC2 family. As to quaternary structure, homodimer. The cofactor is Mn(2+). Co(2+) serves as cofactor. Mg(2+) is required as a cofactor.

The protein resides in the cytoplasm. The protein localises to the nucleus. The enzyme catalyses a 2'-deoxyribonucleoside 5'-phosphate + H2O = a 2'-deoxyribonucleoside + phosphate. In terms of biological role, catalyzes the dephosphorylation of the nucleoside 5'-monophosphates deoxyadenosine monophosphate (dAMP), deoxycytidine monophosphate (dCMP), deoxyguanosine monophosphate (dGMP) and deoxythymidine monophosphate (dTMP). The polypeptide is 5'-deoxynucleotidase hdd1 (Schizosaccharomyces pombe (strain 972 / ATCC 24843) (Fission yeast)).